The primary structure comprises 393 residues: Riboflavin biosynthesis protein RibBA (393 aa).

The DHBP synthase stretch occupies residues 1-200 (MQFDNIDSAL…IDDLIEYRKK (200 aa)). D-ribulose 5-phosphate is bound by residues 27 to 28 (RE), Asp32, 139 to 143 (RNGHT), and Glu163. Mg(2+) is bound at residue Glu28. His142 contacts Mg(2+). The tract at residues 201 to 393 (LEPEIEFKAK…TKKIKMGHLI (193 aa)) is GTP cyclohydrolase II. Position 249 to 253 (249 to 253 (RLHSA)) interacts with GTP. Zn(2+) contacts are provided by Cys254, Cys265, and Cys267. Residues Gln270, 291–293 (EGR), and Thr313 contribute to the GTP site. The Proton acceptor; for GTP cyclohydrolase activity role is filled by Asp325. Arg327 functions as the Nucleophile; for GTP cyclohydrolase activity in the catalytic mechanism. Ser348 and Lys353 together coordinate GTP.

This sequence in the N-terminal section; belongs to the DHBP synthase family. It in the C-terminal section; belongs to the GTP cyclohydrolase II family. It depends on Mg(2+) as a cofactor. Mn(2+) serves as cofactor. The cofactor is Zn(2+).

The catalysed reaction is D-ribulose 5-phosphate = (2S)-2-hydroxy-3-oxobutyl phosphate + formate + H(+). The enzyme catalyses GTP + 4 H2O = 2,5-diamino-6-hydroxy-4-(5-phosphoribosylamino)-pyrimidine + formate + 2 phosphate + 3 H(+). Its pathway is cofactor biosynthesis; riboflavin biosynthesis; 2-hydroxy-3-oxobutyl phosphate from D-ribulose 5-phosphate: step 1/1. The protein operates within cofactor biosynthesis; riboflavin biosynthesis; 5-amino-6-(D-ribitylamino)uracil from GTP: step 1/4. Catalyzes the conversion of D-ribulose 5-phosphate to formate and 3,4-dihydroxy-2-butanone 4-phosphate. Functionally, catalyzes the conversion of GTP to 2,5-diamino-6-ribosylamino-4(3H)-pyrimidinone 5'-phosphate (DARP), formate and pyrophosphate. This Staphylococcus aureus (strain MSSA476) protein is Riboflavin biosynthesis protein RibBA.